The primary structure comprises 160 residues: MRCPFCGNADTQVVDSRVSEEGDTIRRRRRCLSCDKRFTTYERVELAMPSVVKRDGSRTEYDAGKVRGSLSLALRKRPVSTDEVDSAVARIEETLLASGMREVPSEQIGELVMGELKRLDKVAYVRYASVYKSFEDIGEFVEAIREMQGPLLPGKKLRKD.

A zinc finger spans residues 3–34 (CPFCGNADTQVVDSRVSEEGDTIRRRRRCLSC). In terms of domain architecture, ATP-cone spans 49 to 139 (PSVVKRDGSR…VYKSFEDIGE (91 aa)).

This sequence belongs to the NrdR family. It depends on Zn(2+) as a cofactor.

Negatively regulates transcription of bacterial ribonucleotide reductase nrd genes and operons by binding to NrdR-boxes. This is Transcriptional repressor NrdR from Bordetella bronchiseptica (strain ATCC BAA-588 / NCTC 13252 / RB50) (Alcaligenes bronchisepticus).